Here is an 816-residue protein sequence, read N- to C-terminus: Phosphatidylinositol 4-kinase beta (816 aa).

The disordered stretch occupies residues Met1–Leu30. Gly2 is subject to N-acetylglycine. Positions Leu29–Ser242 constitute a PIK helical domain. An interaction with ACBD3 region spans residues Ser41–Ala67. Disordered stretches follow at residues Glu101–Arg120 and Ala248–Ser318. A Phosphoserine modification is found at Ser258. Thr263 carries the phosphothreonine modification. Phosphoserine is present on residues Ser266, Ser275, Ser277, Ser284, and Ser294. Composition is skewed to polar residues over residues Asp278 to Lys297 and Ser306 to Ser318. The residue at position 428 (Ser428) is a Phosphoserine. Thr438 is modified (phosphothreonine). Ser511 bears the Phosphoserine mark. 2 positions are modified to phosphothreonine: Thr517 and Thr519. In terms of domain architecture, PI3K/PI4K catalytic spans Glu535–Thr801. Positions Val541–Gly547 are G-loop. Residues Gln668–Asn676 are catalytic loop. Positions His687–Thr711 are activation loop.

This sequence belongs to the PI3/PI4-kinase family. Type III PI4K subfamily. Interacts with ARF1 and ARF3 in the Golgi complex, but not with ARF4, ARF5 or ARF6. Interacts with NCS1/FREQ in a calcium-independent manner. Interacts with CALN1/CABP8 and CALN2/CABP7; in a calcium-dependent manner; this interaction competes with NCS1/FREQ binding. Interacts with ACBD3. Interacts with ARMH3, YWHAB, YWHAE, YWHAG, YWHAH, YWHAQ, YWHAZ and SFN. Interacts with GGA2 (via VHS domain); the interaction is important for PI4KB location at the Golgi apparatus membrane. Interacts with ATG9A. As to quaternary structure, (Microbial infection) Interacts with Aichi virus protein 3A. Part of a complex Aichi virus protein 3A/ACBD3/PI4KB that allows the synthesis of PI4P at the viral RNA replication sites. Mg(2+) serves as cofactor. The cofactor is Mn(2+). Widely expressed with highest levels in heart, skeletal muscle, pancreas, testis and ovary. Weakly expressed in liver. Expressed in the innear ear in the epithelium of the spinal organ of corti.

The protein localises to the endomembrane system. It is found in the mitochondrion outer membrane. Its subcellular location is the rough endoplasmic reticulum membrane. The protein resides in the golgi apparatus. It localises to the golgi apparatus membrane. The protein localises to the cytoplasm. It is found in the perinuclear region. The catalysed reaction is a 1,2-diacyl-sn-glycero-3-phospho-(1D-myo-inositol) + ATP = a 1,2-diacyl-sn-glycero-3-phospho-(1D-myo-inositol 4-phosphate) + ADP + H(+). Its activity is regulated as follows. Inhibited by wortmannin and adenosine. Increased kinase activity upon interaction with NCS1/FREQ. With respect to regulation, (Microbial infection) Activated by Aichi virus protein 3A, this activation is sensitized by ACBD3. In terms of biological role, phosphorylates phosphatidylinositol (PI) in the first committed step in the production of the second messenger inositol-1,4,5,-trisphosphate (PIP). May regulate Golgi disintegration/reorganization during mitosis, possibly via its phosphorylation. Involved in Golgi-to-plasma membrane trafficking. May play an important role in the inner ear development. Its function is as follows. (Microbial infection) Plays an essential role in Aichi virus RNA replication. Recruited by ACBD3 at the viral replication sites. Functionally, (Microbial infection) Required for cellular spike-mediated entry of human coronavirus SARS-CoV. The sequence is that of Phosphatidylinositol 4-kinase beta from Homo sapiens (Human).